The primary structure comprises 612 residues: MNSLVRRSAQQLSLWRTYCIKHNASEAASPGRNAGRPNYEEFIGRHQRQAQCSIVVQVSSEKSYEELYNYCSSFGSIMGAHHYCVRQDETLHYILLEYATSDEAAAAIGAGVTNGELSGVPVRSPFLWFRAAGGGRRSPKLVANTAPALLSLDGTRQVDQRHLLGLLRGAADIEEQVQQLYEHTRLNELGIRMRFLAALQVQQAIAGMFPAAQAQPFGSSVNGFGRMGCDLDLILRFDSDMGAKIPLEAAVPSRLVYHTKENLSNGRSQTQRHMECFGDMLHLFLPGVCHVRRILQARVPIIKYHHEHLDLEVDLSMSNLTGFYMSELLYMFGEMDPRVRPLTFTIRRWAQTCGLTNPSPGRWISNFSLTCLVMFFLQQLRQPILPTIGALAKAAEPGDSRVTEDGINCTFTRNVDRLGFRSRNQSSLSELLLQFFEFYSQFDFHNRAISLNEGKPLSKPDHSAMYIVNPLEQLLNVSKNVSLEECERLRIEVRNAAWVLESEVENASVPEGDGQELSCGLLNLFKHPEKAVIRPNMFFKPRMVEVSDLFEQKEAGATSSSTPPTPAITYKSASVRQQVQSIKAATRSELKQLRGSGSSVPTSSPNNRRRSR.

Residues 1–57 (MNSLVRRSAQQLSLWRTYCIKHNASEAASPGRNAGRPNYEEFIGRHQRQAQCSIVVQ) constitute a mitochondrion transit peptide. ATP-binding positions include 83–89 (YCVRQDE) and 228–229 (GC). Mg(2+)-binding residues include Asp-230 and Asp-232. One can recognise a PAP-associated domain in the interval 427 to 463 (SLSELLLQFFEFYSQFDFHNRAISLNEGKPLSKPDHS). Disordered stretches follow at residues 555–574 (AGATSSSTPPTPAITYKSAS) and 588–612 (SELKQLRGSGSSVPTSSPNNRRRSR).

Belongs to the DNA polymerase type-B-like family. Requires Mg(2+) as cofactor. It depends on Mn(2+) as a cofactor.

Its subcellular location is the mitochondrion. It carries out the reaction RNA(n) + ATP = RNA(n)-3'-adenine ribonucleotide + diphosphate. Its function is as follows. Polymerase that creates the 3' poly(A) tail of mitochondrial transcripts. This is not required for transcript stability or translation but may maintain mRNA integrity by protecting 3' termini from degradation. This chain is Poly(A) RNA polymerase, mitochondrial, found in Drosophila melanogaster (Fruit fly).